Consider the following 299-residue polypeptide: Bifunctional protein FolD (299 aa).

NADP(+) contacts are provided by residues G168–S170, S193, and I234.

Belongs to the tetrahydrofolate dehydrogenase/cyclohydrolase family. As to quaternary structure, homodimer.

The catalysed reaction is (6R)-5,10-methylene-5,6,7,8-tetrahydrofolate + NADP(+) = (6R)-5,10-methenyltetrahydrofolate + NADPH. The enzyme catalyses (6R)-5,10-methenyltetrahydrofolate + H2O = (6R)-10-formyltetrahydrofolate + H(+). It participates in one-carbon metabolism; tetrahydrofolate interconversion. Its function is as follows. Catalyzes the oxidation of 5,10-methylenetetrahydrofolate to 5,10-methenyltetrahydrofolate and then the hydrolysis of 5,10-methenyltetrahydrofolate to 10-formyltetrahydrofolate. The sequence is that of Bifunctional protein FolD from Bartonella tribocorum (strain CIP 105476 / IBS 506).